The chain runs to 101 residues: Putative pterin-4-alpha-carbinolamine dehydratase (101 aa).

Belongs to the pterin-4-alpha-carbinolamine dehydratase family.

It catalyses the reaction (4aS,6R)-4a-hydroxy-L-erythro-5,6,7,8-tetrahydrobiopterin = (6R)-L-erythro-6,7-dihydrobiopterin + H2O. This Ralstonia pickettii (strain 12J) protein is Putative pterin-4-alpha-carbinolamine dehydratase.